Consider the following 145-residue polypeptide: Peptidyl-prolyl cis-trans isomerase (145 aa).

Residues 1–145 enclose the PPIase cyclophilin-type domain; the sequence is MTQAILETEK…LSVKIVTDAA (145 aa).

The protein belongs to the cyclophilin-type PPIase family.

It carries out the reaction [protein]-peptidylproline (omega=180) = [protein]-peptidylproline (omega=0). In terms of biological role, PPIases accelerate the folding of proteins. It catalyzes the cis-trans isomerization of proline imidic peptide bonds in oligopeptides. The sequence is that of Peptidyl-prolyl cis-trans isomerase (rot) from Synechococcus elongatus (strain ATCC 33912 / PCC 7942 / FACHB-805) (Anacystis nidulans R2).